The chain runs to 247 residues: Small ribosomal subunit protein uS3 (247 aa).

In terms of domain architecture, KH type-2 spans 39-111 (IYDFFDKKVR…NISIQVIELK (73 aa)). The disordered stretch occupies residues 221–247 (EEMDLLNAPKDRRVRRGGERHASTKKN). Positions 236-247 (RGGERHASTKKN) are enriched in basic and acidic residues.

It belongs to the universal ribosomal protein uS3 family. Part of the 30S ribosomal subunit. Forms a tight complex with proteins S10 and S14.

Its function is as follows. Binds the lower part of the 30S subunit head. Binds mRNA in the 70S ribosome, positioning it for translation. The protein is Small ribosomal subunit protein uS3 of Metamycoplasma arthritidis (strain 158L3-1) (Mycoplasma arthritidis).